Consider the following 250-residue polypeptide: 3-deoxy-manno-octulosonate cytidylyltransferase (250 aa).

This sequence belongs to the KdsB family.

It localises to the cytoplasm. The catalysed reaction is 3-deoxy-alpha-D-manno-oct-2-ulosonate + CTP = CMP-3-deoxy-beta-D-manno-octulosonate + diphosphate. Its pathway is nucleotide-sugar biosynthesis; CMP-3-deoxy-D-manno-octulosonate biosynthesis; CMP-3-deoxy-D-manno-octulosonate from 3-deoxy-D-manno-octulosonate and CTP: step 1/1. It participates in bacterial outer membrane biogenesis; lipopolysaccharide biosynthesis. Activates KDO (a required 8-carbon sugar) for incorporation into bacterial lipopolysaccharide in Gram-negative bacteria. In Legionella pneumophila (strain Paris), this protein is 3-deoxy-manno-octulosonate cytidylyltransferase.